The chain runs to 362 residues: Phospho-N-acetylmuramoyl-pentapeptide-transferase (362 aa).

A run of 10 helical transmembrane segments spans residues 18 to 38 (VFGYITLRTVLAALTALAISL), 73 to 93 (TMGGALILIAIGITILLWGDL), 97 to 117 (YVWVTLLVTLGFGAVGWVDDW), 134 to 154 (YFWTSAIALGASIFLGLSATT), 160 to 180 (LIVPFFKAVAYPLGVYGFIAL), 200 to 220 (GLAIMPTVMVAGALAIFAYVA), 237 to 257 (AGELAVFCGAICGAGLGFLWF), 264 to 284 (VFMGDVGALALGAALGTIAVV), 289 to 309 (IVLFIMGGLFVAETLSVMVQV), and 339 to 359 (QVVVRFWIITLMLVLFGLSTL).

The protein belongs to the glycosyltransferase 4 family. MraY subfamily. Mg(2+) serves as cofactor.

It is found in the cell inner membrane. It carries out the reaction UDP-N-acetyl-alpha-D-muramoyl-L-alanyl-gamma-D-glutamyl-meso-2,6-diaminopimeloyl-D-alanyl-D-alanine + di-trans,octa-cis-undecaprenyl phosphate = di-trans,octa-cis-undecaprenyl diphospho-N-acetyl-alpha-D-muramoyl-L-alanyl-D-glutamyl-meso-2,6-diaminopimeloyl-D-alanyl-D-alanine + UMP. The protein operates within cell wall biogenesis; peptidoglycan biosynthesis. Its function is as follows. Catalyzes the initial step of the lipid cycle reactions in the biosynthesis of the cell wall peptidoglycan: transfers peptidoglycan precursor phospho-MurNAc-pentapeptide from UDP-MurNAc-pentapeptide onto the lipid carrier undecaprenyl phosphate, yielding undecaprenyl-pyrophosphoryl-MurNAc-pentapeptide, known as lipid I. The sequence is that of Phospho-N-acetylmuramoyl-pentapeptide-transferase from Azoarcus sp. (strain BH72).